Consider the following 67-residue polypeptide: Large ribosomal subunit protein uL29 (67 aa).

The protein belongs to the universal ribosomal protein uL29 family.

The protein is Large ribosomal subunit protein uL29 of Methanosarcina barkeri (strain Fusaro / DSM 804).